Here is a 366-residue protein sequence, read N- to C-terminus: MTPEHLPTEQYEAQLAEKVARLQSMMAPFSGLVPEVFRSPVSHYRMRAEFRLWHDGDDLYHIMFDQQTKSRIRVDTFPAASQLINTLMKAMIAGVRDNHALRHKLFQIDYLTTLSNQAVVSLLYHKKLDEEWREAATALRDALRAQGLNVHLIGRATKTKIELDQDYIDERLPVAGKEMIYRQVENSFTQPNAAMNIQMLEWALEVTKDSKGDLLELYCGNGNFSLALARNFNRVLATEIAKPSVAAAQYNIAANHIDNVQIIRMAAEEFTQAMNGVREFNRLQGIDLKRYQCETIFVDPPRSGLDSETEKMVQAYPRILYISCNPETLCKNLETLSQTHTVSRLALFDQFPYTHHMECGVLLTAR.

S-adenosyl-L-methionine is bound by residues glutamine 190, tyrosine 218, asparagine 223, glutamate 239, and aspartate 299. The Nucleophile role is filled by cysteine 324. The Proton acceptor role is filled by glutamate 358.

It belongs to the class I-like SAM-binding methyltransferase superfamily. RNA M5U methyltransferase family. TrmA subfamily.

The enzyme catalyses uridine(54) in tRNA + S-adenosyl-L-methionine = 5-methyluridine(54) in tRNA + S-adenosyl-L-homocysteine + H(+). It carries out the reaction uridine(341) in tmRNA + S-adenosyl-L-methionine = 5-methyluridine(341) in tmRNA + S-adenosyl-L-homocysteine + H(+). In terms of biological role, dual-specificity methyltransferase that catalyzes the formation of 5-methyluridine at position 54 (m5U54) in all tRNAs, and that of position 341 (m5U341) in tmRNA (transfer-mRNA). In Salmonella choleraesuis (strain SC-B67), this protein is tRNA/tmRNA (uracil-C(5))-methyltransferase.